The sequence spans 1726 residues: Protein NLRC5 (1726 aa).

Residues 207 to 537 form the NACHT domain; the sequence is RVVMLSGQAG…THLTIQEFMA (331 aa). 213-220 is an ATP binding site; the sequence is GQAGSGKT. LRR repeat units lie at residues 879–902, 904–925, 1002–1025, 1026–1048, 1103–1126, 1128–1155, 1212–1235, 1351–1374, 1387–1411, 1421–1443, 1447–1468, 1502–1525, 1532–1553, 1560–1580, 1588–1609, 1616–1637, 1642–1662, and 1670–1691; these read LTVLNLSHNALGNRGLKKLLEHLP, LDTIQEINVSDNGVDMDGVVLL, NLDFSHGTLKDESTEKLLKFLPNM, ASLNLLNLSHIQMSTDSALLLVQ, CHHLTDLDLSSNFLKDEDVKTFVQ, LPKLQISGSVSLNNNNLTEVGVLYLLSL, LNSVQTLELRNNSFSADTIKYLIT, AEFLSSVLPSLKNLKILSLSSKGE, AQKHLEQLSLAHHVIKDRGAAVLGN, SLSLLKCLDWTATGGRDLVRGLV, SLEEIRLDSIELDEESIDCFAQ, LIELEEIELIGLRMGDRGVEELVK, RLRKINLSENRVSDHAGEMLVK, ALQQIHLFRNNLGHSSAAVLG, ELTELDLSENQMESKGCSSVCE, ALKKLHLTSIGTSDLVNVASCL, SIEDISLSWNNCENDVVLKLA, and KLKRLDLEANNINTSGAMALAT.

Belongs to the NLRP family.

The protein resides in the cytoplasm. Functionally, probable regulator of the NF-kappa-B and type I interferon signaling pathways. May also regulate the type II interferon signaling pathway. Plays a role in homeostatic control of innate immunity and in antiviral defense mechanisms. The chain is Protein NLRC5 (nlrc5) from Ictalurus punctatus (Channel catfish).